Reading from the N-terminus, the 451-residue chain is Cysteine desulfurase (451 aa).

Residues alanine 121, threonine 122, glutamine 229, serine 249, and histidine 251 each coordinate pyridoxal 5'-phosphate. N6-(pyridoxal phosphate)lysine is present on lysine 252. Threonine 289 serves as a coordination point for pyridoxal 5'-phosphate. Cysteine 375 functions as the Cysteine persulfide intermediate in the catalytic mechanism. Cysteine 375 contacts [2Fe-2S] cluster. Cysteine 375 is a Zn(2+) binding site. Cysteine 375 carries the post-translational modification Cysteine persulfide.

Belongs to the class-V pyridoxal-phosphate-dependent aminotransferase family. NifS/IscS subfamily. As to quaternary structure, homodimer. Component of the mitochondrial core iron-sulfur cluster (ISC) complex composed of NFS1, LYRM4, NDUFAB1, ISCU, FXN, and FDX2; this complex is a heterohexamer containing two copies of each monomer. Component of cyteine desulfurase complex composed of NFS1, LYRM4 and NDUFAB1; this complex contributes to the activation of cysteine desulfurase activity and NFS1 stabilization. Interacts (homodimer form) with ISCU (D-state); each monomer interacts with the C-terminal regions of each NFS1 monomer. Interacts with HSPA9. Interacts (via homodimer form) with FDX2. Interacts (via homodimer form) with FXN. Interacts with LYRM4. Component of a complex composed of FXN, NFS1, LYRM4 and ISCU. In terms of assembly, monomer. Homodimer. Oligomer. Interacts with ISCU. Component of the cysteine desulfurase complex composed of NFS1 and LYRM4; this complex contributes to the activation of cysteine desulfurase activity. Interacts with MOCS3. It depends on pyridoxal 5'-phosphate as a cofactor. Post-translationally, N-gluconoylated. In terms of processing, cysteine persulfide intermediate is reduced by thiol-containing molecules like glutathione and L-cysteine. Persulfide reduction is a rate-limiting step of cysteine desulfurase catalytic cycle.

It is found in the mitochondrion. Its subcellular location is the cytoplasm. The protein localises to the nucleus. It localises to the cytoskeleton. The protein resides in the microtubule organizing center. It is found in the centrosome. It carries out the reaction (sulfur carrier)-H + L-cysteine = (sulfur carrier)-SH + L-alanine. The catalysed reaction is L-cysteinyl-[cysteine desulfurase] + L-cysteine = S-sulfanyl-L-cysteinyl-[cysteine desulfurase] + L-alanine. With respect to regulation, active only in complex with LYRM4. Its function is as follows. Cysteine desulfurase, of the core iron-sulfur cluster (ISC) assembly complex, that catalyzes the desulfuration of L-cysteine to L-alanine, as component of the cysteine desulfurase complex leading to the formation of a cysteine persulfide intermediate at the active site cysteine residue and participates in the [2Fe-2S] clusters assembly on the scaffolding protein ISCU. The persulfide is then transferred on the flexible Cys loop from the catalytic site of NFS1 to the surface of NFS1. After the NFS1-linked persulfide sulfur is transferred to one of the conserved Cys residues of the scaffold, a reaction assisted by FXN. The core iron-sulfur cluster (ISC) assembly complex is involved in the de novo synthesis of a [2Fe-2S] cluster, the first step of the mitochondrial iron-sulfur protein biogenesis. This process is initiated by the cysteine desulfurase complex (NFS1:LYRM4:NDUFAB1) that produces persulfide which is delivered on the scaffold protein ISCU in a FXN-dependent manner. Then this complex is stabilized by FDX2 which provides reducing equivalents to accomplish the [2Fe-2S] cluster assembly. Finally, the [2Fe-2S] cluster is transferred from ISCU to chaperone proteins, including HSCB, HSPA9 and GLRX5. In terms of biological role, may catalyze the desulfuration of L-cysteine to L-alanine as component of the cysteine desulfurase complex (NFS1:LYRM4), leading to the formation of a cysteine persulfide intermediate. Acts as a sulfur donor for MOCS3 by transferring the sulfur of the cysteine persulfide intermediate on MOCS3. The protein is Cysteine desulfurase of Rattus norvegicus (Rat).